A 363-amino-acid chain; its full sequence is RNA polymerase I-specific transcription initiation factor RRN5 (363 aa).

The tract at residues leucine 301–glutamate 344 is disordered. Over residues serine 302–glutamate 313 the composition is skewed to basic and acidic residues. Residues asparagine 317 to asparagine 328 are compositionally biased toward low complexity. Acidic residues predominate over residues glycine 333–glutamate 344.

As to quaternary structure, component of the UAF (upstream activation factor) complex which consists of UAF30, RRN5, RRN9, RRN10, and histones H3 and H4.

The protein localises to the nucleus. Its subcellular location is the nucleolus. In terms of biological role, component of the UAF (upstream activation factor) complex which interacts with the upstream element of the RNA polymerase I promoter and forms a stable preinitiation complex. Together with SPT15/TBP UAF seems to stimulate basal transcription to a fully activated level. This chain is RNA polymerase I-specific transcription initiation factor RRN5 (RRN5), found in Saccharomyces cerevisiae (strain ATCC 204508 / S288c) (Baker's yeast).